The primary structure comprises 150 residues: MQIILLDKVVNLGNLGEVVRVKDGYARNFLIPSGRARRATASAKQEFEAKRAELEKAAAAKLAESQTVGEKLAGTTCKLTQKAGVDGRLFGSVTNADIAEELTKTGFKVTKAQIRMPNGPIKVVGDSKVSVALHTDVLVEITVSVYGETA.

This sequence belongs to the bacterial ribosomal protein bL9 family.

In terms of biological role, binds to the 23S rRNA. The chain is Large ribosomal subunit protein bL9 from Albidiferax ferrireducens (strain ATCC BAA-621 / DSM 15236 / T118) (Rhodoferax ferrireducens).